The chain runs to 312 residues: MSLKIQTSNVTNKNDPKSINSRVFIGNLNTAVVKKSDVETIFSKYGRVAGCSVHKGYAFVQYANERHARAAVLGENGRVLAGQTLDINMAGEPKPNRPKGLKRAATAIYSGYSFDYDYYQDYFCARLFDYRGRLSPVPVPRAVPVKRPRVTVPLVRRVKTTIPVKLFARSTAVTTGSAKIKLKSSELQTIKTELTQIKSNIDALLGRLEQIAEEQKANPDGKKKGDSSSGGGGGSSGGGGSSNVGGGSSGGSGSCSSSSRLPAPQEDTASEAGTPQGEVQTRDDGDEEGLLTHSEEELEHSQDTDAEDGALQ.

An N-acetylserine modification is found at Ser2. A Glycyl lysine isopeptide (Lys-Gly) (interchain with G-Cter in SUMO2) cross-link involves residue Lys4. Residues 21–92 (SRVFIGNLNT…QTLDINMAGE (72 aa)) enclose the RRM domain. An N6-acetyllysine modification is found at Lys44. Residues Lys94 and Lys99 each participate in a glycyl lysine isopeptide (Lys-Gly) (interchain with G-Cter in SUMO2) cross-link. Residue Ser135 is modified to Phosphoserine. Residue Lys159 forms a Glycyl lysine isopeptide (Lys-Gly) (interchain with G-Cter in SUMO2) linkage. Lys165 is modified (N6-acetyllysine; alternate). Residue Lys165 forms a Glycyl lysine isopeptide (Lys-Gly) (interchain with G-Cter in SUMO2); alternate linkage. Residues Lys179 and Lys191 each participate in a glycyl lysine isopeptide (Lys-Gly) (interchain with G-Cter in SUMO2) cross-link. Positions 184-216 (SSELQTIKTELTQIKSNIDALLGRLEQIAEEQK) form a coiled coil. The segment covering 214-226 (EQKANPDGKKKGD) has biased composition (basic and acidic residues). Residues 214 to 312 (EQKANPDGKK…DTDAEDGALQ (99 aa)) are disordered. Over residues 228-253 (SSGGGGGSSGGGGSSNVGGGSSGGSG) the composition is skewed to gly residues. Thr268 carries the post-translational modification Phosphothreonine. Ser270 carries the post-translational modification Phosphoserine. Thr274 and Thr292 each carry phosphothreonine. The segment covering 293–303 (HSEEELEHSQD) has biased composition (basic and acidic residues). 2 positions are modified to phosphoserine: Ser294 and Ser301. Thr304 is subject to Phosphothreonine.

The protein belongs to the RRM HNRPC family. RALY subfamily. Identified in the spliceosome C complex. Interacts (through its RNA-binding domain) with FUS (through its RNA-binding domain); both are components of the same RNPs. In terms of tissue distribution, widely expressed. Expressed in brain, testis, lung, spleen and kidney. Weakly expressed in liver.

The protein localises to the nucleus. In terms of biological role, RNA-binding protein that acts as a transcriptional cofactor for cholesterol biosynthetic genes in the liver. Binds the lipid-responsive non-coding RNA LeXis and is required for LeXis-mediated effect on cholesterogenesis. May be a heterogeneous nuclear ribonucleoprotein (hnRNP). The protein is RNA-binding protein Raly (Raly) of Mus musculus (Mouse).